A 298-amino-acid chain; its full sequence is tRNA dimethylallyltransferase (298 aa).

Gly-16–Ser-23 contacts ATP. Thr-18–Ser-23 contacts substrate. Interaction with substrate tRNA stretches follow at residues Asp-41–Gln-44 and Gln-165–Arg-169.

The protein belongs to the IPP transferase family. As to quaternary structure, monomer. Mg(2+) is required as a cofactor.

It catalyses the reaction adenosine(37) in tRNA + dimethylallyl diphosphate = N(6)-dimethylallyladenosine(37) in tRNA + diphosphate. Catalyzes the transfer of a dimethylallyl group onto the adenine at position 37 in tRNAs that read codons beginning with uridine, leading to the formation of N6-(dimethylallyl)adenosine (i(6)A). This is tRNA dimethylallyltransferase from Rhizobium rhizogenes (strain K84 / ATCC BAA-868) (Agrobacterium radiobacter).